Consider the following 376-residue polypeptide: Tetraacyldisaccharide 4'-kinase (376 aa).

51–58 contributes to the ATP binding site; it reads AVGGTGKT.

The protein belongs to the LpxK family.

It carries out the reaction a lipid A disaccharide + ATP = a lipid IVA + ADP + H(+). It participates in glycolipid biosynthesis; lipid IV(A) biosynthesis; lipid IV(A) from (3R)-3-hydroxytetradecanoyl-[acyl-carrier-protein] and UDP-N-acetyl-alpha-D-glucosamine: step 6/6. Its function is as follows. Transfers the gamma-phosphate of ATP to the 4'-position of a tetraacyldisaccharide 1-phosphate intermediate (termed DS-1-P) to form tetraacyldisaccharide 1,4'-bis-phosphate (lipid IVA). This chain is Tetraacyldisaccharide 4'-kinase, found in Bacteroides fragilis (strain ATCC 25285 / DSM 2151 / CCUG 4856 / JCM 11019 / LMG 10263 / NCTC 9343 / Onslow / VPI 2553 / EN-2).